Reading from the N-terminus, the 138-residue chain is Transcription antitermination protein NusB (138 aa).

It belongs to the NusB family.

Involved in transcription antitermination. Required for transcription of ribosomal RNA (rRNA) genes. Binds specifically to the boxA antiterminator sequence of the ribosomal RNA (rrn) operons. This is Transcription antitermination protein NusB from Blochmanniella floridana.